A 358-amino-acid chain; its full sequence is Beta-lactamase (358 aa).

Ser-60 acts as the Acyl-ester intermediate in catalysis. Tyr-146 serves as the catalytic Proton acceptor. 311–313 lines the substrate pocket; the sequence is KTG.

The protein belongs to the class-C beta-lactamase family.

It is found in the periplasm. It catalyses the reaction a beta-lactam + H2O = a substituted beta-amino acid. Its function is as follows. This protein is a serine beta-lactamase with a substrate specificity for cephalosporins. This chain is Beta-lactamase, found in Pseudomonas fluorescens.